The chain runs to 1342 residues: DNA-directed RNA polymerase subunit beta (1342 aa).

It belongs to the RNA polymerase beta chain family. In terms of assembly, the RNAP catalytic core consists of 2 alpha, 1 beta, 1 beta' and 1 omega subunit. When a sigma factor is associated with the core the holoenzyme is formed, which can initiate transcription.

The enzyme catalyses RNA(n) + a ribonucleoside 5'-triphosphate = RNA(n+1) + diphosphate. DNA-dependent RNA polymerase catalyzes the transcription of DNA into RNA using the four ribonucleoside triphosphates as substrates. The protein is DNA-directed RNA polymerase subunit beta of Vibrio vulnificus (strain CMCP6).